The sequence spans 399 residues: Dual-specificity RNA methyltransferase RlmN (399 aa).

The Proton acceptor role is filled by E121. One can recognise a Radical SAM core domain in the interval 127–376; sequence DVDRGTLCVS…VRTPRGRDIL (250 aa). C134 and C379 are joined by a disulfide. Positions 141, 145, and 148 each coordinate [4Fe-4S] cluster. S-adenosyl-L-methionine-binding positions include 205 to 206, S237, 259 to 261, and N336; these read GE and SLH. C379 functions as the S-methylcysteine intermediate in the catalytic mechanism.

This sequence belongs to the radical SAM superfamily. RlmN family. The cofactor is [4Fe-4S] cluster.

The protein localises to the cytoplasm. It carries out the reaction adenosine(2503) in 23S rRNA + 2 reduced [2Fe-2S]-[ferredoxin] + 2 S-adenosyl-L-methionine = 2-methyladenosine(2503) in 23S rRNA + 5'-deoxyadenosine + L-methionine + 2 oxidized [2Fe-2S]-[ferredoxin] + S-adenosyl-L-homocysteine. The catalysed reaction is adenosine(37) in tRNA + 2 reduced [2Fe-2S]-[ferredoxin] + 2 S-adenosyl-L-methionine = 2-methyladenosine(37) in tRNA + 5'-deoxyadenosine + L-methionine + 2 oxidized [2Fe-2S]-[ferredoxin] + S-adenosyl-L-homocysteine. Functionally, specifically methylates position 2 of adenine 2503 in 23S rRNA and position 2 of adenine 37 in tRNAs. m2A2503 modification seems to play a crucial role in the proofreading step occurring at the peptidyl transferase center and thus would serve to optimize ribosomal fidelity. The chain is Dual-specificity RNA methyltransferase RlmN from Methylocella silvestris (strain DSM 15510 / CIP 108128 / LMG 27833 / NCIMB 13906 / BL2).